The primary structure comprises 258 residues: Pimeloyl-[acyl-carrier protein] methyl ester esterase (258 aa).

Substrate is bound by residues Trp22, 84–85, and 145–149; these read SL and FLAIQ. Residue Ser84 is the Nucleophile of the active site. Residues Asp209 and His238 contribute to the active site. His238 is a binding site for substrate.

It belongs to the AB hydrolase superfamily. Carboxylesterase BioH family. As to quaternary structure, monomer.

The protein localises to the cytoplasm. It carries out the reaction 6-carboxyhexanoyl-[ACP] methyl ester + H2O = 6-carboxyhexanoyl-[ACP] + methanol + H(+). It participates in cofactor biosynthesis; biotin biosynthesis. In terms of biological role, the physiological role of BioH is to remove the methyl group introduced by BioC when the pimeloyl moiety is complete. It allows to synthesize pimeloyl-ACP via the fatty acid synthetic pathway through the hydrolysis of the ester bonds of pimeloyl-ACP esters. This chain is Pimeloyl-[acyl-carrier protein] methyl ester esterase, found in Pseudoalteromonas atlantica (strain T6c / ATCC BAA-1087).